The chain runs to 1976 residues: Myosin-10 (1976 aa).

R18 is subject to Omega-N-methylarginine. In terms of domain architecture, Myosin N-terminal SH3-like spans 31–81 (TAKKLVWIPSERHGFEAASIKEERGDEVMVELAENGKKAMVNKDDIQKMNP). The Myosin motor domain maps to 85–783 (SKVEDMAELT…VLAHLEEERD (699 aa)). Residue 178–185 (GESGAGKT) participates in ATP binding. Position 214 is a phosphoserine (L214). K442 bears the N6-acetyllysine mark. The actin-binding stretch occupies residues 661–683 (LTKLMATLRNTNPNFVRCIIPNH). The IQ domain maps to 786–815 (ITDIIIFFQAVCRGYLARKAFAKKQQQLSA). Residues 845-1976 (LQVTRQEEEL…VNETQPPQSE (1132 aa)) are a coiled coil. Residues 1127 to 1147 (FESEKASRNKAEKQKRDLSEE) form a disordered region. Basic and acidic residues predominate over residues 1129 to 1147 (SEKASRNKAEKQKRDLSEE). S1145 carries the phosphoserine modification. N6-acetyllysine is present on residues K1241, K1301, and K1645. Disordered stretches follow at residues 1697-1728 (ASSE…SALL) and 1872-1976 (MEKA…PQSE). Residues 1698–1708 (SSERARRHAEQ) show a composition bias toward basic and acidic residues. Residue R1930 is modified to Omega-N-methylarginine. Phosphoserine occurs at positions 1935, 1937, 1938, and 1939. R1940 is modified (omega-N-methylarginine). Phosphoserine occurs at positions 1952 and 1956. T1960 is modified (phosphothreonine). Residues 1967-1976 (VNETQPPQSE) show a composition bias toward polar residues. S1975 bears the Phosphoserine mark.

This sequence belongs to the TRAFAC class myosin-kinesin ATPase superfamily. Myosin family. In terms of assembly, myosin is a hexameric protein that consists of 2 heavy chain subunits (MHC), 2 alkali light chain subunits (MLC) and 2 regulatory light chain subunits (MLC-2). Interacts with PLEKHG6. Interacts with ECPAS. Interacts with KIF26B. Interacts with LARP6. Interacts with MCC. Interacts with CFAP95. (Microbial infection) Interacts with herpes simplex virus 1/HHV-1 envelope glycoprotein B. Phosphorylated by ABL2. As to expression, isoform 1 is expressed in cerebellum and spinal chord. Isoform 2 is expressed in cerebrum and retina. Isoform 3 is expressed in the cerebrum and to a much lower extent in cerebellum.

It localises to the cell projection. It is found in the lamellipodium. The protein localises to the cell membrane. In terms of biological role, cellular myosin that appears to play a role in cytokinesis, cell shape, and specialized functions such as secretion and capping. Involved with LARP6 in the stabilization of type I collagen mRNAs for CO1A1 and CO1A2. During cell spreading, plays an important role in cytoskeleton reorganization, focal contacts formation (in the central part but not the margins of spreading cells), and lamellipodial extension; this function is mechanically antagonized by MYH9. Functionally, (Microbial infection) Acts as a receptor for herpes simplex virus 1/HHV-1 envelope glycoprotein B. In Homo sapiens (Human), this protein is Myosin-10 (MYH10).